Consider the following 299-residue polypeptide: ATP phosphoribosyltransferase (299 aa).

Belongs to the ATP phosphoribosyltransferase family. Long subfamily. Equilibrium between an active dimeric form, an inactive hexameric form and higher aggregates. Interconversion between the various forms is largely reversible and is influenced by the natural substrates and inhibitors of the enzyme. Requires Mg(2+) as cofactor.

The protein localises to the cytoplasm. It catalyses the reaction 1-(5-phospho-beta-D-ribosyl)-ATP + diphosphate = 5-phospho-alpha-D-ribose 1-diphosphate + ATP. It participates in amino-acid biosynthesis; L-histidine biosynthesis; L-histidine from 5-phospho-alpha-D-ribose 1-diphosphate: step 1/9. Feedback inhibited by histidine. In terms of biological role, catalyzes the condensation of ATP and 5-phosphoribose 1-diphosphate to form N'-(5'-phosphoribosyl)-ATP (PR-ATP). Has a crucial role in the pathway because the rate of histidine biosynthesis seems to be controlled primarily by regulation of HisG enzymatic activity. The polypeptide is ATP phosphoribosyltransferase (Blochmanniella pennsylvanica (strain BPEN)).